The chain runs to 202 residues: Peptidyl-tRNA hydrolase (202 aa).

TRNA is bound at residue Tyr19. Catalysis depends on His24, which acts as the Proton acceptor. Tyr70, Asn72, and Asn118 together coordinate tRNA.

It belongs to the PTH family. In terms of assembly, monomer.

It is found in the cytoplasm. The enzyme catalyses an N-acyl-L-alpha-aminoacyl-tRNA + H2O = an N-acyl-L-amino acid + a tRNA + H(+). Functionally, hydrolyzes ribosome-free peptidyl-tRNAs (with 1 or more amino acids incorporated), which drop off the ribosome during protein synthesis, or as a result of ribosome stalling. Its function is as follows. Catalyzes the release of premature peptidyl moieties from peptidyl-tRNA molecules trapped in stalled 50S ribosomal subunits, and thus maintains levels of free tRNAs and 50S ribosomes. This chain is Peptidyl-tRNA hydrolase, found in Prochlorococcus marinus (strain NATL1A).